Reading from the N-terminus, the 581-residue chain is Putative carboxypeptidase YOL153C (581 aa).

Residues 1-29 are Cytoplasmic-facing; the sequence is MTETHHAPLPDVYPSSKQPTSSTYSKCKK. A Glycyl lysine isopeptide (Lys-Gly) (interchain with G-Cter in ubiquitin) cross-link involves residue Lys17. A helical; Signal-anchor for type II membrane protein membrane pass occupies residues 30–46; sequence FGLPLIGLLTLLLAYIS. The Extracellular portion of the chain corresponds to 47 to 581; the sequence is SFTKPVPNST…IVNVNEYGHD (535 aa). 2 N-linked (GlcNAc...) asparagine glycosylation sites follow: Asn54 and Asn76. His170 provides a ligand contact to Zn(2+). Asp172 is a catalytic residue. Asp207 is a binding site for Zn(2+). Catalysis depends on Glu241, which acts as the Proton acceptor. Residues Glu242 and Asp270 each coordinate Zn(2+). Asn335 and Asn428 each carry an N-linked (GlcNAc...) asparagine glycan. His550 contacts Zn(2+).

The protein belongs to the peptidase M20A family. Requires Zn(2+) as cofactor.

The protein resides in the membrane. The chain is Putative carboxypeptidase YOL153C from Saccharomyces cerevisiae (strain ATCC 204508 / S288c) (Baker's yeast).